The primary structure comprises 178 residues: Fatty-acid and retinol-binding protein 1 (178 aa).

An N-terminal signal peptide occupies residues 1-16 (MYHQLILMALIGVIMA). 2 N-linked (GlcNAc...) asparagine glycosylation sites follow: Asn44 and Asn75. Coiled coils occupy residues 67–89 (DAAL…ELRN) and 123–154 (KLDM…LKAT). Asn157 is a glycosylation site (N-linked (GlcNAc...) asparagine).

The protein belongs to the fatty-acid and retinol-binding protein (FARBP) family. In terms of processing, N-glycosylated.

Its subcellular location is the secreted. Its function is as follows. Binds retinol and different fatty acids. This Onchocerca gutturosa protein is Fatty-acid and retinol-binding protein 1.